The following is a 51-amino-acid chain: Large ribosomal subunit protein eL39-like (51 aa).

This sequence belongs to the eukaryotic ribosomal protein eL39 family. As to quaternary structure, component of a male germ cell-specific 60S large ribosomal subunit (LSU), which contains RPL10L and RPL39L, instead of RPL10 and RPL39 paralogs. The composition of the rest of the complex is similar to classical ribosomes. In terms of tissue distribution, highly expressed in spermatocytes and spermatids. Highly expressed in embryonic stem cells.

The protein localises to the cytoplasm. Its function is as follows. Male germ cell-specific component of the ribosome, which is required for the formation of sperm and male fertility. Replaces the RPL39 paralog in the ribosome of male germ cells. The ribosome is a large ribonucleoprotein complex responsible for the synthesis of proteins in the cell. The male germ cell-specific ribosome displays a ribosomal polypeptide exit tunnel of distinct size and charge states compared with the classical ribosome. It is responsible for regulating the biosynthesis and folding of a subset of male germ-cell-specific proteins that are essential for the formation of sperm. The protein is Large ribosomal subunit protein eL39-like of Mus musculus (Mouse).